A 295-amino-acid chain; its full sequence is Fructose-bisphosphate aldolase class 1 (295 aa).

Glu-176 functions as the Proton acceptor in the catalytic mechanism. The active-site Schiff-base intermediate with dihydroxyacetone-P is Lys-213.

The protein belongs to the class I fructose-bisphosphate aldolase family.

The enzyme catalyses beta-D-fructose 1,6-bisphosphate = D-glyceraldehyde 3-phosphate + dihydroxyacetone phosphate. It participates in carbohydrate degradation; glycolysis; D-glyceraldehyde 3-phosphate and glycerone phosphate from D-glucose: step 4/4. The polypeptide is Fructose-bisphosphate aldolase class 1 (Fusobacterium nucleatum subsp. nucleatum (strain ATCC 25586 / DSM 15643 / BCRC 10681 / CIP 101130 / JCM 8532 / KCTC 2640 / LMG 13131 / VPI 4355)).